A 741-amino-acid polypeptide reads, in one-letter code: Protein lin-54 homolog (741 aa).

In terms of domain architecture, CRC spans 513–626 (PRKPCNCTKS…KCIGCKNFEE (114 aa)). The DNA-binding stretch occupies residues 515-528 (KPCNCTKSLCLKLY). Cysteine 517, cysteine 519, cysteine 524, cysteine 529, cysteine 531, cysteine 538, cysteine 541, cysteine 543, and cysteine 546 together coordinate Zn(2+). Residues 575 to 588 (IGKGKEGESDRRHS) are linker. Zn(2+) contacts are provided by cysteine 591, cysteine 593, cysteine 598, cysteine 603, cysteine 605, cysteine 612, cysteine 616, cysteine 618, and cysteine 621. Residues 591–604 (CNCKRSGCLKNYCE) form a DNA-binding region.

It belongs to the lin-54 family. Component of the DREAM complex.

It localises to the nucleus. Its function is as follows. Component of the DREAM complex, a multiprotein complex that can both act as a transcription activator or repressor depending on the context. Specifically recognizes the consensus motif 5'-TTYRAA-3' in target DNA. This chain is Protein lin-54 homolog (lin54), found in Xenopus tropicalis (Western clawed frog).